Reading from the N-terminus, the 516-residue chain is Acyl-lipid (7-3)-desaturase, chloroplastic (516 aa).

Residues 1 to 25 (MNATMQRSAVAGRTSGKVATTARAS) form a disordered region. Residues 1–47 (MNATMQRSAVAGRTSGKVATTARASSMARPRLPIAGRVARRSAVTVR) constitute a chloroplast transit peptide. In terms of domain architecture, Cytochrome b5 heme-binding spans 83 to 148 (WTVYRGVAYD…LADFPVDAVP (66 aa)). Residues histidine 100 and histidine 123 each contribute to the heme site. The next 2 helical transmembrane spans lie at 186 to 206 (GAAF…TYDA) and 209 to 229 (LTGA…QHCG). Positions 227-231 (HCGNH) match the Histidine box-1 motif. The short motif at 262–267 (HQVSHH) is the Histidine box-2 element. 4 helical membrane passes run 305-325 (MWAL…QALL), 354-374 (FLLY…GGAA), 375-395 (GYLF…HNVP), and 423-443 (VLTS…GLNL). The Histidine box-3 signature appears at 444–448 (QIEHH).

This sequence belongs to the fatty acid desaturase type 1 family. Fe(2+) serves as cofactor.

The protein localises to the plastid. It localises to the chloroplast membrane. It carries out the reaction a (7Z,10Z,13Z,16Z,19Z)-docosapentaenoyl-containing glycerolipid + 2 Fe(II)-[cytochrome b5] + O2 + 2 H(+) = a (4Z,7Z,10Z,13Z,16Z,19Z)-docosahexaenoyl-containing glycerolipid + 2 Fe(III)-[cytochrome b5] + 2 H2O. The enzyme catalyses a (7Z,10Z,13Z,16Z)-docosatetraenoyl-containing glycerolipid + 2 Fe(II)-[cytochrome b5] + O2 + 2 H(+) = a (4Z,7Z,10Z,13Z,16Z)-docosapentaenoyl-containing glycerolipid + 2 Fe(III)-[cytochrome b5] + 2 H2O. Fatty acid desaturase that introduces a cis double bond at the 4-position in 16-carbon polyunsaturated fatty acids that contain a Delta(7) double bond, resulting in the production of 16 carbon fatty acid (7Z,10Z,13Z)-hexadeca-7,10,13-trienoate. The sequence is that of Acyl-lipid (7-3)-desaturase, chloroplastic from Chlamydomonas reinhardtii (Chlamydomonas smithii).